Here is a 283-residue protein sequence, read N- to C-terminus: Ribonuclease P protein subunit p38 (283 aa).

The residue at position 2 (A2) is an N-acetylalanine. Phosphoserine occurs at positions 12, 226, and 235.

The protein belongs to the eukaryotic ribosomal protein eL8 family. In terms of assembly, component of nuclear RNase P and RNase MRP ribonucleoproteins. RNase P consists of a catalytic RNA moiety and about 10 protein subunits; POP1, POP4, POP5, POP7, RPP14, RPP21, RPP25, RPP30, RPP38 and RPP40. Within the RNase P complex, POP1, POP7 and RPP25 form the 'finger' subcomplex, POP5, RPP14, RPP40 and homodimeric RPP30 form the 'palm' subcomplex, and RPP21, POP4 and RPP38 form the 'wrist' subcomplex. All subunits of the RNase P complex interact with the catalytic RNA. Several subunits of RNase P are also part of the RNase MRP complex. RNase MRP consists of a catalytic RNA moiety and about 8 protein subunits; POP1, POP7, RPP25, RPP30, RPP38, RPP40 and possibly also POP4 and POP5.

The protein localises to the nucleus. It localises to the nucleolus. Its function is as follows. Component of ribonuclease P, a ribonucleoprotein complex that generates mature tRNA molecules by cleaving their 5'-ends. Also a component of the MRP ribonuclease complex, which cleaves pre-rRNA sequences. In Homo sapiens (Human), this protein is Ribonuclease P protein subunit p38 (RPP38).